Reading from the N-terminus, the 560-residue chain is Membrane protein insertase YidC (560 aa).

The helical transmembrane segment at Ile-7 to Tyr-27 threads the bilayer. The span at Ala-38 to Ala-56 shows a compositional bias: polar residues. Residues Ala-38–Val-76 are disordered. The next 4 helical transmembrane spans lie at Ile-367–Phe-387, Leu-437–Leu-457, Phe-468–Met-488, and Pro-515–Val-535.

Belongs to the OXA1/ALB3/YidC family. Type 1 subfamily. In terms of assembly, interacts with the Sec translocase complex via SecD. Specifically interacts with transmembrane segments of nascent integral membrane proteins during membrane integration.

The protein localises to the cell inner membrane. Its function is as follows. Required for the insertion and/or proper folding and/or complex formation of integral membrane proteins into the membrane. Involved in integration of membrane proteins that insert both dependently and independently of the Sec translocase complex, as well as at least some lipoproteins. Aids folding of multispanning membrane proteins. This chain is Membrane protein insertase YidC, found in Pseudomonas fluorescens (strain Pf0-1).